The primary structure comprises 168 residues: Mesencephalic astrocyte-derived neurotrophic factor homolog (168 aa).

The N-terminal stretch at 1–17 (MSRLVLLISLVIVVASA) is a signal peptide. 4 disulfide bridges follow: Cys22-Cys109, Cys25-Cys97, Cys55-Cys66, and Cys143-Cys146.

It belongs to the ARMET family. Expressed in the intestine, spermatheca and nervous system. Expressed in the hypoderm. Expressed in structures of the excretory system. Not expressed in the male gonad.

The protein localises to the secreted. It is found in the endoplasmic reticulum lumen. Its function is as follows. Inhibits endoplasmic reticulum (ER) stress response. Retained in the ER under normal conditions and is up-regulated and secreted by the ER in response to ER stress and hypoxia. Following secretion by the ER, directly binds to 3-O-sulfogalactosylceramide, a lipid sulfatide in the outer cell membrane of target cells. Sulfatide binding promotes its cellular uptake by endocytosis, and is required for its role in alleviating ER stress under ER stress conditions. Has a neuroprotective role, ensuring survival of dopaminergic neurons during normal growth. This chain is Mesencephalic astrocyte-derived neurotrophic factor homolog, found in Caenorhabditis elegans.